Here is a 323-residue protein sequence, read N- to C-terminus: Serine/threonine-protein phosphatase PP1-gamma catalytic subunit (323 aa).

Positions 64, 66, 92, and 124 each coordinate Mn(2+). The Proton donor role is filled by His125. Residues His173 and His248 each coordinate Mn(2+). Positions 300-323 are disordered; sequence EKKKPNASRPVTPPRGMITKQAKK.

Belongs to the PPP phosphatase family. PP-1 subfamily. PP1 comprises a catalytic subunit, ppp1c1, ppp1cb or ppp1cc, which is folded into its native form by inhibitor 2 and glycogen synthetase kinase 3, and then is complexed to one or several targeting or regulatory subunits. Mn(2+) serves as cofactor.

The protein resides in the cytoplasm. The protein localises to the nucleus. It localises to the cleavage furrow. It is found in the nucleolus. Its subcellular location is the nucleoplasm. The protein resides in the chromosome. The protein localises to the centromere. It localises to the kinetochore. It is found in the nucleus speckle. Its subcellular location is the midbody. The protein resides in the mitochondrion. The protein localises to the cytoskeleton. It localises to the microtubule organizing center. It carries out the reaction O-phospho-L-seryl-[protein] + H2O = L-seryl-[protein] + phosphate. The catalysed reaction is O-phospho-L-threonyl-[protein] + H2O = L-threonyl-[protein] + phosphate. In terms of biological role, protein phosphatase 1 (PP1) is essential for cell division, and participates in the regulation of glycogen metabolism, muscle contractility and protein synthesis. Promotes nuclear envelope reassembly by targeting nuclear membrane vesicles to chromatin at the end of mitosis. Acts by dephosphorylating membrane proteins such as lamin B receptor (lbr) to regulate the binding of membrane proteins to chromatin. The sequence is that of Serine/threonine-protein phosphatase PP1-gamma catalytic subunit from Xenopus tropicalis (Western clawed frog).